The sequence spans 264 residues: MKSKLKLHGFNNLTKTLSFNIYDICYAETPQDQQAYVEYINSVYDAERLTRILTDVVDIIGANILNIARQDYDPQGASVTILISEQPVTPTESQIEESPGPLPETILAHLDKSHITVHTYPEIHPVDGIATFRVDIDVSTCGVISPLKALNYLIHKFESDIVTVDYRVRGFTRDVEGKKHFIDHEINSIQNYLSEDTRNGYQMTDVNVYQENLFHTKMLLKQFELDNYLFGDATSNLSAEQREQVTAKVKHEMLEIFYGRNVAV.

The Schiff-base intermediate with substrate; via pyruvic acid role is filled by serine 113. Serine 113 carries the post-translational modification Pyruvic acid (Ser); by autocatalysis. Histidine 118 serves as the catalytic Proton acceptor; for processing activity. The active-site Proton donor; for catalytic activity is cysteine 141.

The protein belongs to the prokaryotic AdoMetDC family. Type 2 subfamily. In terms of assembly, heterooctamer of four alpha and four beta chains arranged as a tetramer of alpha/beta heterodimers. Pyruvate serves as cofactor. Is synthesized initially as an inactive proenzyme. Formation of the active enzyme involves a self-maturation process in which the active site pyruvoyl group is generated from an internal serine residue via an autocatalytic post-translational modification. Two non-identical subunits are generated from the proenzyme in this reaction, and the pyruvate is formed at the N-terminus of the alpha chain, which is derived from the carboxyl end of the proenzyme. The post-translation cleavage follows an unusual pathway, termed non-hydrolytic serinolysis, in which the side chain hydroxyl group of the serine supplies its oxygen atom to form the C-terminus of the beta chain, while the remainder of the serine residue undergoes an oxidative deamination to produce ammonia and the pyruvoyl group blocking the N-terminus of the alpha chain.

It carries out the reaction S-adenosyl-L-methionine + H(+) = S-adenosyl 3-(methylsulfanyl)propylamine + CO2. It participates in amine and polyamine biosynthesis; S-adenosylmethioninamine biosynthesis; S-adenosylmethioninamine from S-adenosyl-L-methionine: step 1/1. Its function is as follows. Catalyzes the decarboxylation of S-adenosylmethionine to S-adenosylmethioninamine (dcAdoMet), the propylamine donor required for the synthesis of the polyamines spermine and spermidine from the diamine putrescine. This is S-adenosylmethionine decarboxylase proenzyme from Pseudomonas syringae pv. tomato (strain ATCC BAA-871 / DC3000).